The sequence spans 453 residues: Tyrosine-protein phosphatase non-receptor type 18 (453 aa).

Positions 26–291 (LAREFSDIKA…RFLYHTVAQL (266 aa)) constitute a Tyrosine-protein phosphatase domain. Residues Asp197, 229-235 (CSAGCGR), and Gln276 contribute to the substrate site. Cys229 acts as the Phosphocysteine intermediate in catalysis. Phosphotyrosine is present on residues Tyr381 and Tyr419. Residues 384-453 (VAPRAQRPVA…RDPPAEWTRV (70 aa)) are disordered. A compositionally biased stretch (basic and acidic residues) spans 442-453 (GPRDPPAEWTRV).

Belongs to the protein-tyrosine phosphatase family. Non-receptor class 4 subfamily. Interacts with PSTPIP1. In terms of tissue distribution, highest expression in bone marrow. Also expressed in kidney, lung, ovary, spleen, thymus and lymph node.

It is found in the nucleus. The protein resides in the cytoplasm. It carries out the reaction O-phospho-L-tyrosyl-[protein] + H2O = L-tyrosyl-[protein] + phosphate. In terms of biological role, may be involved in growth and differentiation of hematopoietic cells. In Mus musculus (Mouse), this protein is Tyrosine-protein phosphatase non-receptor type 18 (Ptpn18).